We begin with the raw amino-acid sequence, 366 residues long: Alcohol dehydrogenase (366 aa).

Positions 41, 62, 63, and 167 each coordinate Zn(2+).

Belongs to the zinc-containing alcohol dehydrogenase family. In terms of assembly, homotetramer. The cofactor is Zn(2+).

The catalysed reaction is a primary alcohol + NAD(+) = an aldehyde + NADH + H(+). It catalyses the reaction a secondary alcohol + NAD(+) = a ketone + NADH + H(+). It carries out the reaction (R,R)-butane-2,3-diol + NAD(+) = (R)-acetoin + NADH + H(+). The enzyme catalyses an aldehyde + NAD(+) + H2O = a carboxylate + NADH + 2 H(+). Multifunctional alcohol dehydrogenase exhibiting NAD(+)-dependent dehydrogenase activities for 2,3-butanediol, ethanol and acetaldehyde, and reductase activities for acetoin (NADH-dependent), and diacetyl and acetaldehyde (independently of whether NADH or NADPH is the reductant). The rate of oxidation of 2,3-butanediol is much higher than for the oxidation of ethanol. Has acetaldehyde dehydrogenase activity leading to acetate formation. May function in the release of excess reducing power in the absence of exogenous hydrogen acceptors such as oxygen. This chain is Alcohol dehydrogenase (adh), found in Cupriavidus necator (strain ATCC 17699 / DSM 428 / KCTC 22496 / NCIMB 10442 / H16 / Stanier 337) (Ralstonia eutropha).